Reading from the N-terminus, the 486-residue chain is Carboxypeptidase Y homolog ARB_07161 (486 aa).

The first 17 residues, 1 to 17, serve as a signal peptide directing secretion; the sequence is MKGLLSLLLVGAANALA. An N-linked (GlcNAc...) asparagine glycan is attached at Asn-111. The active site involves Ser-241. Cystine bridges form between Cys-281–Cys-305, Cys-288–Cys-298, and Cys-327–Cys-334. The active site involves Asp-403. Cys-406 serves as a coordination point for substrate. Asn-430 carries an N-linked (GlcNAc...) asparagine glycan. His-462 is a catalytic residue.

It belongs to the peptidase S10 family.

It is found in the secreted. The catalysed reaction is Release of a C-terminal amino acid with broad specificity.. Its function is as follows. Involved in degradation of small peptides. This Arthroderma benhamiae (strain ATCC MYA-4681 / CBS 112371) (Trichophyton mentagrophytes) protein is Carboxypeptidase Y homolog ARB_07161.